A 375-amino-acid polypeptide reads, in one-letter code: Ribosomal RNA large subunit methyltransferase F (375 aa).

Disordered regions lie at residues M1 to K39 and N262 to T281. Basic residues predominate over residues A27–V38.

This sequence belongs to the methyltransferase superfamily. METTL16/RlmF family.

Its subcellular location is the cytoplasm. It catalyses the reaction adenosine(1618) in 23S rRNA + S-adenosyl-L-methionine = N(6)-methyladenosine(1618) in 23S rRNA + S-adenosyl-L-homocysteine + H(+). Functionally, specifically methylates the adenine in position 1618 of 23S rRNA. This chain is Ribosomal RNA large subunit methyltransferase F, found in Vibrio parahaemolyticus serotype O3:K6 (strain RIMD 2210633).